Consider the following 812-residue polypeptide: 5-methyltetrahydropteroyltriglutamate--homocysteine methyltransferase 3, chloroplastic (812 aa).

Residues 1–33 (MGQLALQRLQPLASLPRRPPSLPPPSSATPSLP) constitute a chloroplast transit peptide. The disordered stretch occupies residues 13–33 (ASLPRRPPSLPPPSSATPSLP). Residues 17 to 27 (RRPPSLPPPSS) show a composition bias toward pro residues. The 5-methyltetrahydropteroyltri-L-glutamate site is built by Lys-66 and Asn-164. The interval 430-456 (MRQASRRSSPRVTNAAVQQDVDAVKKS) is disordered. L-homocysteine is bound by residues 485–487 (IGS) and Glu-538. Residues 485-487 (IGS) and Glu-538 each bind L-methionine. Residues Asp-543, Tyr-566, 569-570 (RC), and Trp-615 each bind 5-methyltetrahydropteroyltri-L-glutamate. Asp-653 serves as a coordination point for L-homocysteine. Asp-653 contacts L-methionine. Positions 695, 697, 706, 710, and 719 each coordinate Zn(2+). The active-site Proton donor is His-749. Cys-781 is a binding site for Zn(2+).

Belongs to the vitamin-B12 independent methionine synthase family. Zn(2+) is required as a cofactor. Expressed in seeds.

Its subcellular location is the plastid. The protein localises to the chloroplast. It carries out the reaction 5-methyltetrahydropteroyltri-L-glutamate + L-homocysteine = tetrahydropteroyltri-L-glutamate + L-methionine. It participates in amino-acid biosynthesis; L-methionine biosynthesis via de novo pathway; L-methionine from L-homocysteine (MetE route): step 1/1. Functionally, catalyzes the transfer of a methyl group from 5-methyltetrahydrofolate to homocysteine resulting in methionine formation. The protein is 5-methyltetrahydropteroyltriglutamate--homocysteine methyltransferase 3, chloroplastic (MS3) of Arabidopsis thaliana (Mouse-ear cress).